Here is a 149-residue protein sequence, read N- to C-terminus: Ribonuclease pancreatic (149 aa).

The first 25 residues, 1 to 25, serve as a signal peptide directing secretion; sequence MGLEKSLILFPLFFLLLGWVQPSLG. Positions 32 and 35 each coordinate substrate. Histidine 37 (proton acceptor) is an active-site residue. 4 disulfide bridges follow: cysteine 51-cysteine 109, cysteine 65-cysteine 120, cysteine 83-cysteine 135, and cysteine 90-cysteine 97. Residues 66–70 and lysine 91 contribute to the substrate site; that span reads KPVNT. Residue histidine 144 is the Proton donor of the active site.

Belongs to the pancreatic ribonuclease family. As to quaternary structure, monomer. Interacts with and forms tight 1:1 complexes with RNH1. Dimerization of two such complexes may occur. Interaction with RNH1 inhibits this protein. In terms of tissue distribution, pancreas.

The protein resides in the secreted. The enzyme catalyses an [RNA] containing cytidine + H2O = an [RNA]-3'-cytidine-3'-phosphate + a 5'-hydroxy-ribonucleotide-3'-[RNA].. It carries out the reaction an [RNA] containing uridine + H2O = an [RNA]-3'-uridine-3'-phosphate + a 5'-hydroxy-ribonucleotide-3'-[RNA].. Its function is as follows. Endonuclease that catalyzes the cleavage of RNA on the 3' side of pyrimidine nucleotides. Acts on single-stranded and double-stranded RNA. The polypeptide is Ribonuclease pancreatic (Rnase1) (Mus musculus (Mouse)).